The primary structure comprises 231 residues: Large ribosomal subunit protein uL1 (231 aa).

This sequence belongs to the universal ribosomal protein uL1 family. In terms of assembly, part of the 50S ribosomal subunit.

Its function is as follows. Binds directly to 23S rRNA. The L1 stalk is quite mobile in the ribosome, and is involved in E site tRNA release. Functionally, protein L1 is also a translational repressor protein, it controls the translation of the L11 operon by binding to its mRNA. The sequence is that of Large ribosomal subunit protein uL1 from Herminiimonas arsenicoxydans.